Reading from the N-terminus, the 150-residue chain is Large ribosomal subunit protein bL9 (150 aa).

This sequence belongs to the bacterial ribosomal protein bL9 family.

Its function is as follows. Binds to the 23S rRNA. The polypeptide is Large ribosomal subunit protein bL9 (Streptococcus equi subsp. equi (strain 4047)).